The following is a 385-amino-acid chain: 8-amino-7-oxononanoate synthase (385 aa).

Arginine 21 is a substrate binding site. 108–109 serves as a coordination point for pyridoxal 5'-phosphate; that stretch reads GF. Histidine 133 contacts substrate. Pyridoxal 5'-phosphate-binding residues include serine 179, histidine 207, and threonine 233. Lysine 236 carries the N6-(pyridoxal phosphate)lysine modification. Residue threonine 352 coordinates substrate.

Belongs to the class-II pyridoxal-phosphate-dependent aminotransferase family. BioF subfamily. In terms of assembly, homodimer. Requires pyridoxal 5'-phosphate as cofactor.

The catalysed reaction is 6-carboxyhexanoyl-[ACP] + L-alanine + H(+) = (8S)-8-amino-7-oxononanoate + holo-[ACP] + CO2. Its pathway is cofactor biosynthesis; biotin biosynthesis. Catalyzes the decarboxylative condensation of pimeloyl-[acyl-carrier protein] and L-alanine to produce 8-amino-7-oxononanoate (AON), [acyl-carrier protein], and carbon dioxide. This chain is 8-amino-7-oxononanoate synthase, found in Salmonella paratyphi C (strain RKS4594).